Consider the following 319-residue polypeptide: Beta-ketoacyl-[acyl-carrier-protein] synthase III (319 aa).

Catalysis depends on residues C113 and H246. Positions 247–251 (QANIR) are ACP-binding. N276 is a catalytic residue.

This sequence belongs to the thiolase-like superfamily. FabH family. Homodimer.

Its subcellular location is the cytoplasm. It catalyses the reaction malonyl-[ACP] + acetyl-CoA + H(+) = 3-oxobutanoyl-[ACP] + CO2 + CoA. The protein operates within lipid metabolism; fatty acid biosynthesis. In terms of biological role, catalyzes the condensation reaction of fatty acid synthesis by the addition to an acyl acceptor of two carbons from malonyl-ACP. Catalyzes the first condensation reaction which initiates fatty acid synthesis and may therefore play a role in governing the total rate of fatty acid production. Possesses both acetoacetyl-ACP synthase and acetyl transacylase activities. Its substrate specificity determines the biosynthesis of branched-chain and/or straight-chain of fatty acids. The protein is Beta-ketoacyl-[acyl-carrier-protein] synthase III of Ehrlichia ruminantium (strain Gardel).